The primary structure comprises 154 residues: Nitrogen regulatory protein (154 aa).

The region spanning 6–150 is the PTS EIIA type-2 domain; it reads QILTPGRSLV…EALYQIVVDV (145 aa). His68 acts as the Tele-phosphohistidine intermediate in catalysis.

Its subcellular location is the cytoplasm. Functionally, seems to have a role in regulating nitrogen assimilation. This is Nitrogen regulatory protein (ptsN) from Pseudomonas aeruginosa (strain ATCC 15692 / DSM 22644 / CIP 104116 / JCM 14847 / LMG 12228 / 1C / PRS 101 / PAO1).